The chain runs to 365 residues: Chorismate synthase (365 aa).

NADP(+) contacts are provided by Arg48 and Arg54. FMN is bound by residues 125–127 (RSS), 238–239 (NA), Gly278, 293–297 (KPTSS), and Arg319.

This sequence belongs to the chorismate synthase family. In terms of assembly, homotetramer. FMNH2 serves as cofactor.

The enzyme catalyses 5-O-(1-carboxyvinyl)-3-phosphoshikimate = chorismate + phosphate. The protein operates within metabolic intermediate biosynthesis; chorismate biosynthesis; chorismate from D-erythrose 4-phosphate and phosphoenolpyruvate: step 7/7. Functionally, catalyzes the anti-1,4-elimination of the C-3 phosphate and the C-6 proR hydrogen from 5-enolpyruvylshikimate-3-phosphate (EPSP) to yield chorismate, which is the branch point compound that serves as the starting substrate for the three terminal pathways of aromatic amino acid biosynthesis. This reaction introduces a second double bond into the aromatic ring system. The chain is Chorismate synthase from Alteromonas mediterranea (strain DSM 17117 / CIP 110805 / LMG 28347 / Deep ecotype).